We begin with the raw amino-acid sequence, 65 residues long: MPKMKSKSSAKMRFSVRAGGTIKRGQAFKRHILTKKTTKNKRHLRGSAEVAKADIKSIRSMLPYA.

Residues 1–10 are compositionally biased toward basic residues; the sequence is MPKMKSKSSA. The tract at residues 1 to 21 is disordered; sequence MPKMKSKSSAKMRFSVRAGGT.

This sequence belongs to the bacterial ribosomal protein bL35 family.

The chain is Large ribosomal subunit protein bL35 from Polynucleobacter necessarius subsp. necessarius (strain STIR1).